The chain runs to 155 residues: Small ribosomal subunit protein uS7cz/uS7cy (155 aa).

Belongs to the universal ribosomal protein uS7 family. In terms of assembly, part of the 30S ribosomal subunit.

It is found in the plastid. Its subcellular location is the chloroplast. Functionally, one of the primary rRNA binding proteins, it binds directly to 16S rRNA where it nucleates assembly of the head domain of the 30S subunit. This is Small ribosomal subunit protein uS7cz/uS7cy (rps7-A) from Lotus japonicus (Lotus corniculatus var. japonicus).